The following is a 213-amino-acid chain: 5''-phosphoribostamycin phosphatase (213 aa).

His-8 acts as the Tele-phosphohistidine intermediate in catalysis. Residue His-155 is part of the active site.

It belongs to the histidine phosphatase superfamily.

It catalyses the reaction 5''-phosphoribostamycin + H2O = ribostamycin + phosphate. The protein operates within antibiotic biosynthesis; butirosin biosynthesis. Functionally, catalyzes dephosphorylation of 5''-phosphoribostamycin to generate ribostamycinin the biosynthetic pathway of butirosin. The polypeptide is 5''-phosphoribostamycin phosphatase (btrP) (Niallia circulans (Bacillus circulans)).